Reading from the N-terminus, the 227-residue chain is Cytochrome c oxidase subunit 2 (227 aa).

The Mitochondrial intermembrane segment spans residues 1-14 (MAYPFQLGLQDATS). Residues 15-45 (PIMEELMNFHDHTLMIVFLISSLVLYIISLM) traverse the membrane as a helical segment. Over 46-59 (LTTKLTHTSTMDAQ) the chain is Mitochondrial matrix. Residues 60–87 (EVETIWTILPAVILILIALPSLRILYMM) traverse the membrane as a helical segment. The Mitochondrial intermembrane portion of the chain corresponds to 88–227 (DEINNPVLTV…NFENWSTSMI (140 aa)). Positions 161, 196, 198, 200, 204, and 207 each coordinate Cu cation. Residue glutamate 198 coordinates Mg(2+).

It belongs to the cytochrome c oxidase subunit 2 family. In terms of assembly, component of the cytochrome c oxidase (complex IV, CIV), a multisubunit enzyme composed of 14 subunits. The complex is composed of a catalytic core of 3 subunits MT-CO1, MT-CO2 and MT-CO3, encoded in the mitochondrial DNA, and 11 supernumerary subunits COX4I, COX5A, COX5B, COX6A, COX6B, COX6C, COX7A, COX7B, COX7C, COX8 and NDUFA4, which are encoded in the nuclear genome. The complex exists as a monomer or a dimer and forms supercomplexes (SCs) in the inner mitochondrial membrane with NADH-ubiquinone oxidoreductase (complex I, CI) and ubiquinol-cytochrome c oxidoreductase (cytochrome b-c1 complex, complex III, CIII), resulting in different assemblies (supercomplex SCI(1)III(2)IV(1) and megacomplex MCI(2)III(2)IV(2)). Found in a complex with TMEM177, COA6, COX18, COX20, SCO1 and SCO2. Interacts with TMEM177 in a COX20-dependent manner. Interacts with COX20. Interacts with COX16. The cofactor is Cu cation.

The protein localises to the mitochondrion inner membrane. The catalysed reaction is 4 Fe(II)-[cytochrome c] + O2 + 8 H(+)(in) = 4 Fe(III)-[cytochrome c] + 2 H2O + 4 H(+)(out). In terms of biological role, component of the cytochrome c oxidase, the last enzyme in the mitochondrial electron transport chain which drives oxidative phosphorylation. The respiratory chain contains 3 multisubunit complexes succinate dehydrogenase (complex II, CII), ubiquinol-cytochrome c oxidoreductase (cytochrome b-c1 complex, complex III, CIII) and cytochrome c oxidase (complex IV, CIV), that cooperate to transfer electrons derived from NADH and succinate to molecular oxygen, creating an electrochemical gradient over the inner membrane that drives transmembrane transport and the ATP synthase. Cytochrome c oxidase is the component of the respiratory chain that catalyzes the reduction of oxygen to water. Electrons originating from reduced cytochrome c in the intermembrane space (IMS) are transferred via the dinuclear copper A center (CU(A)) of subunit 2 and heme A of subunit 1 to the active site in subunit 1, a binuclear center (BNC) formed by heme A3 and copper B (CU(B)). The BNC reduces molecular oxygen to 2 water molecules using 4 electrons from cytochrome c in the IMS and 4 protons from the mitochondrial matrix. The polypeptide is Cytochrome c oxidase subunit 2 (MT-CO2) (Apodemus mystacinus (Broad-toothed field mouse)).